The chain runs to 515 residues: 2-isopropylmalate synthase (515 aa).

The 263-residue stretch at 4–266 (IKFFDTTLRD…ETRLNLQEIK (263 aa)) folds into the Pyruvate carboxyltransferase domain. Mn(2+)-binding residues include aspartate 13, histidine 201, histidine 203, and asparagine 237. The regulatory domain stretch occupies residues 391–515 (QLSSIQVQYG…RGENEKVATP (125 aa)).

Belongs to the alpha-IPM synthase/homocitrate synthase family. LeuA type 1 subfamily. In terms of assembly, homodimer. It depends on Mn(2+) as a cofactor.

It is found in the cytoplasm. The enzyme catalyses 3-methyl-2-oxobutanoate + acetyl-CoA + H2O = (2S)-2-isopropylmalate + CoA + H(+). Its pathway is amino-acid biosynthesis; L-leucine biosynthesis; L-leucine from 3-methyl-2-oxobutanoate: step 1/4. Functionally, catalyzes the condensation of the acetyl group of acetyl-CoA with 3-methyl-2-oxobutanoate (2-ketoisovalerate) to form 3-carboxy-3-hydroxy-4-methylpentanoate (2-isopropylmalate). In Geobacillus kaustophilus (strain HTA426), this protein is 2-isopropylmalate synthase.